We begin with the raw amino-acid sequence, 474 residues long: MATSWGSILQDEKQLEELAKQAIDRALAEGVLLRSAQHPSSSDVVTYAPFTLFPSPVPSALLEQAYAVQMDFNILVDAVSQNPAFLEQTLSSTIKKDDYTARLFDIYKQVLKEGIAQTVFLGLNRSDYMFQCGADGSKALKQIEINTISASFGGLASRTPAVHRHVLNVLNKTKEASKILSNNPSKGLALGIAKAWELYGSANAVVLLIAQEKERNIFDQRAVENELLDRKIHVIRGRFEDVSERGSLDQNRRLFMDDQEVAVVYFRDGYMPSQYNSQNWEARLMLERSRAAKCPDIAIQLAGTKKVQQELSRVGLLEALLPGQPEAVARLRATFAGLYSLDMGEEGDQAIAEALAAPSHFVLKPQREGGGNNLYGEEMVQALEQLKDSEERASYILMEKIEPEPFRNCLLRPGSPAQVVQCISELGIFGVYVRQGTTLVMNKHVGHLLRTKAVEHADGGVAAGVAVLDNPYPV.

Ala-2 is modified (N-acetylalanine). Position 125 (Arg-125) interacts with substrate. Glu-144 contacts ATP. Mg(2+) contacts are provided by Glu-144 and Asn-146. Residues 148–151 (ISAS), 214–216 (ERN), Gln-220, and 267–270 (RDGY) each bind substrate. Residues Lys-305, 364–373 (KPQREGGGNN), Tyr-375, and 398–401 (MEKI) each bind ATP. Glu-368 serves as a coordination point for Mg(2+). Ser-415 is subject to Phosphoserine. Glu-425 provides a ligand contact to ATP. Arg-450 contributes to the substrate binding site. The ATP site is built by Lys-452 and Asp-458. A substrate-binding site is contributed by 461-462 (VA).

The protein belongs to the eukaryotic GSH synthase family. In terms of assembly, homodimer. Requires Mg(2+) as cofactor.

The enzyme catalyses gamma-L-glutamyl-L-cysteine + glycine + ATP = glutathione + ADP + phosphate + H(+). It carries out the reaction gamma-L-glutamyl-(2S)-2-aminobutanoate + glycine + ATP = ophthalmate + ADP + phosphate + H(+). It participates in sulfur metabolism; glutathione biosynthesis; glutathione from L-cysteine and L-glutamate: step 2/2. In terms of biological role, catalyzes the production of glutathione from gamma-glutamylcysteine and glycine in an ATP-dependent manner. Glutathione (gamma-glutamylcysteinylglycine, GSH) is the most abundant intracellular thiol in living aerobic cells and is required for numerous processes including the protection of cells against oxidative damage, amino acid transport, the detoxification of foreign compounds, the maintenance of protein sulfhydryl groups in a reduced state and acts as a cofactor for a number of enzymes. Participates in ophthalmate biosynthesis in hepatocytes. The protein is Glutathione synthetase of Mus musculus (Mouse).